Reading from the N-terminus, the 277-residue chain is 3-methyl-2-oxobutanoate hydroxymethyltransferase (277 aa).

Mg(2+)-binding residues include Asp53 and Asp96. 3-methyl-2-oxobutanoate contacts are provided by residues 53 to 54 (DS), Asp96, and Lys126. Glu128 is a binding site for Mg(2+). The active-site Proton acceptor is the Glu195.

Belongs to the PanB family. Homodecamer; pentamer of dimers. The cofactor is Mg(2+).

The protein resides in the cytoplasm. The catalysed reaction is 3-methyl-2-oxobutanoate + (6R)-5,10-methylene-5,6,7,8-tetrahydrofolate + H2O = 2-dehydropantoate + (6S)-5,6,7,8-tetrahydrofolate. Its pathway is cofactor biosynthesis; (R)-pantothenate biosynthesis; (R)-pantoate from 3-methyl-2-oxobutanoate: step 1/2. Functionally, catalyzes the reversible reaction in which hydroxymethyl group from 5,10-methylenetetrahydrofolate is transferred onto alpha-ketoisovalerate to form ketopantoate. The protein is 3-methyl-2-oxobutanoate hydroxymethyltransferase of Chlorobium phaeobacteroides (strain BS1).